Consider the following 46-residue polypeptide: Esculentin-1SEa (46 aa).

A disulfide bridge connects residues Cys40 and Cys46.

Expressed by the skin glands.

The protein resides in the secreted. In terms of biological role, mast cell degranulating peptide. Causes histamine release from rat peritoneal mast cells in vitro. Has antibacterial activity against the Gram-negative bacterium E.coli K12 and Gram-positive bacterium M.luteus NCT C2665. The protein is Esculentin-1SEa of Lithobates sevosus (Dusky gopher frog).